Consider the following 424-residue polypeptide: N-succinylarginine dihydrolase (424 aa).

Residues 19–28, Asn110, and 137–138 contribute to the substrate site; these read AGLSRGNVAS and HR. Glu174 is a catalytic residue. Arg206 is a substrate binding site. His242 is an active-site residue. Residues Asp244 and Asn351 each coordinate substrate. Cys357 (nucleophile) is an active-site residue.

This sequence belongs to the succinylarginine dihydrolase family. In terms of assembly, homodimer.

The enzyme catalyses N(2)-succinyl-L-arginine + 2 H2O + 2 H(+) = N(2)-succinyl-L-ornithine + 2 NH4(+) + CO2. It participates in amino-acid degradation; L-arginine degradation via AST pathway; L-glutamate and succinate from L-arginine: step 2/5. In terms of biological role, catalyzes the hydrolysis of N(2)-succinylarginine into N(2)-succinylornithine, ammonia and CO(2). In Zymomonas mobilis subsp. mobilis (strain ATCC 31821 / ZM4 / CP4), this protein is N-succinylarginine dihydrolase.